The primary structure comprises 62 residues: DNA-binding protein 7 (62 aa).

It belongs to the 7 kDa DNA-binding/endoribonuclease P2 family. As to quaternary structure, monomer.

It is found in the cytoplasm. Can constrain negative DNA supercoils. May be involved in maintaining the integrity of the genome at high temperature. The polypeptide is DNA-binding protein 7 (Metallosphaera sedula (strain ATCC 51363 / DSM 5348 / JCM 9185 / NBRC 15509 / TH2)).